Consider the following 532-residue polypeptide: 2,3-bisphosphoglycerate-independent phosphoglycerate mutase (532 aa).

The Mn(2+) site is built by aspartate 15 and serine 65. The Phosphoserine intermediate role is filled by serine 65. Substrate is bound by residues histidine 126, 156-157 (RD), arginine 188, arginine 194, 258-261 (RPDR), and lysine 331. Mn(2+) is bound by residues aspartate 398, histidine 402, aspartate 439, histidine 440, and histidine 457.

This sequence belongs to the BPG-independent phosphoglycerate mutase family. In terms of assembly, monomer. Mn(2+) serves as cofactor.

The enzyme catalyses (2R)-2-phosphoglycerate = (2R)-3-phosphoglycerate. It functions in the pathway carbohydrate degradation; glycolysis; pyruvate from D-glyceraldehyde 3-phosphate: step 3/5. Catalyzes the interconversion of 2-phosphoglycerate and 3-phosphoglycerate. This Cyanothece sp. (strain PCC 7425 / ATCC 29141) protein is 2,3-bisphosphoglycerate-independent phosphoglycerate mutase.